The sequence spans 490 residues: Probable glycine dehydrogenase (decarboxylating) subunit 2 (490 aa).

Position 273 is an N6-(pyridoxal phosphate)lysine (lysine 273).

It belongs to the GcvP family. C-terminal subunit subfamily. The glycine cleavage system is composed of four proteins: P, T, L and H. In this organism, the P 'protein' is a heterodimer of two subunits. Pyridoxal 5'-phosphate serves as cofactor.

The catalysed reaction is N(6)-[(R)-lipoyl]-L-lysyl-[glycine-cleavage complex H protein] + glycine + H(+) = N(6)-[(R)-S(8)-aminomethyldihydrolipoyl]-L-lysyl-[glycine-cleavage complex H protein] + CO2. In terms of biological role, the glycine cleavage system catalyzes the degradation of glycine. The P protein binds the alpha-amino group of glycine through its pyridoxal phosphate cofactor; CO(2) is released and the remaining methylamine moiety is then transferred to the lipoamide cofactor of the H protein. The sequence is that of Probable glycine dehydrogenase (decarboxylating) subunit 2 from Staphylococcus aureus (strain bovine RF122 / ET3-1).